A 361-amino-acid polypeptide reads, in one-letter code: Zygote arrest protein 1 (361 aa).

Disordered stretches follow at residues 1–23 (MFPA…AGDG), 98–128 (QPAG…PRSW), and 148–252 (VAGG…EQDK). Thr-154 is modified (phosphothreonine; by CDK1). The residue at position 161 (Ser-161) is a Phosphoserine; by CDK1. Residues 168 to 177 (REPEPREVAA) are compositionally biased toward basic and acidic residues. The segment at 263 to 346 (KYGYYHCKDC…RQDLCGRCKD (84 aa)) adopts a 3CxxC-type zinc-finger fold.

The protein belongs to the ZAR1 family. In terms of assembly, interacts with YBX2. In terms of processing, phosphorylation by CDK1 does not regulate formation of MARDO (mitochondria-associated ribonucleoprotein domain) membraneless compartment. Ubiquitinated and degradaded by the proteasome during oocyte meiotic maturation, leading to MARDO (mitochondria-associated ribonucleoprotein domain) membraneless compartment dissolution. In terms of tissue distribution, ovary. Expressed in primary oocytes (from primary through antral follicle stages) and during the progression from Meiosis I to Meiosis II. The mRNA is detected in growing oocytes (early primary follicle, type 3a) through fully grown oocytes (antral follicle, type 8).

It localises to the cytoplasm. It is found in the cytoplasmic ribonucleoprotein granule. MRNA-binding protein that mediates formation of MARDO (mitochondria-associated ribonucleoprotein domain), a membraneless compartment that stores maternal mRNAs in oocytes. MARDO assembly around mitochondria is directed by an increase in mitochondrial membrane potential during oocyte growth. Promotes formation of MARDO phase-separated membraneless compartment by undergoing liquid-liquid phase separation upon binding to maternal mRNAs. Binds to the 3'-UTR of maternal mRNAs. Maternal mRNAs stored in the MARDO are translationally repressed. Essential for female fertility and oocyte-to-embryo transition by coordinating maternal mRNA storage, translation and degradation. The sequence is that of Zygote arrest protein 1 from Mus musculus (Mouse).